Reading from the N-terminus, the 1129-residue chain is PAN2-PAN3 deadenylation complex catalytic subunit PAN2 (1129 aa).

5 WD repeats span residues 20–60 (PPAV…YTSY), 104–146 (PDFK…DTLP), 148–183 (DAQY…VIKV), 186–226 (GHTG…FSLK), and 280–319 (LYDS…HFPE). A linker region spans residues 320–457 (YSNPTEFADH…DLHLDDVTRK (138 aa)). Positions 396–427 (RTKRRNQIEVTRQTDRSSDSLTPPKFLSEKSR) are disordered. The region spanning 458–830 (DVPAMYGNVE…LPSVLTFQTK (373 aa)) is the USP domain. One can recognise an Exonuclease domain in the interval 880–1052 (VAIDAEFIRL…IEDATTALKL (173 aa)). A divalent metal cation contacts are provided by Asp883, Glu885, Asp992, and Asp1045. Residues 1083 to 1129 (APGSGNRNSMPAGMTATGAGRDTPEPMTTPKKGGAFGGVGFRSPMRR) form a disordered region.

This sequence belongs to the peptidase C19 family. PAN2 subfamily. As to quaternary structure, forms a heterotrimer with an asymmetric homodimer of the regulatory subunit PAN3 to form the poly(A)-nuclease (PAN) deadenylation complex. It depends on a divalent metal cation as a cofactor.

The protein resides in the cytoplasm. The catalysed reaction is Exonucleolytic cleavage of poly(A) to 5'-AMP.. Positively regulated by the regulatory subunit PAN3. Functionally, catalytic subunit of the poly(A)-nuclease (PAN) deadenylation complex, one of two cytoplasmic mRNA deadenylases involved in mRNA turnover. PAN specifically shortens poly(A) tails of RNA and the activity is stimulated by poly(A)-binding protein PAB1. PAN deadenylation is followed by rapid degradation of the shortened mRNA tails by the CCR4-NOT complex. Deadenylated mRNAs are then degraded by two alternative mechanisms, namely exosome-mediated 3'-5' exonucleolytic degradation, or deadenylation-dependent mRNA decaping and subsequent 5'-3' exonucleolytic degradation by XRN1. May also be involved in post-transcriptional maturation of mRNA poly(A) tails. The chain is PAN2-PAN3 deadenylation complex catalytic subunit PAN2 from Phaeosphaeria nodorum (strain SN15 / ATCC MYA-4574 / FGSC 10173) (Glume blotch fungus).